We begin with the raw amino-acid sequence, 89 residues long: MAKKSKIAKERKREELVNKYYELRKELKAKGDYETLRKLPRDSSPTRLTRRCKVTGRPRGVLRKFEMSRIAFREHAHKGQIPGVKKSSW.

This sequence belongs to the universal ribosomal protein uS14 family. In terms of assembly, part of the 30S ribosomal subunit. Contacts proteins S3 and S10.

Binds 16S rRNA, required for the assembly of 30S particles and may also be responsible for determining the conformation of the 16S rRNA at the A site. This Staphylococcus aureus (strain MRSA252) protein is Small ribosomal subunit protein uS14A.